The following is a 157-amino-acid chain: 2-C-methyl-D-erythritol 2,4-cyclodiphosphate synthase (157 aa).

A divalent metal cation-binding residues include aspartate 8 and histidine 10. Residues 8-10 (DVH) and 34-35 (HS) contribute to the 4-CDP-2-C-methyl-D-erythritol 2-phosphate site. Histidine 42 provides a ligand contact to a divalent metal cation. 4-CDP-2-C-methyl-D-erythritol 2-phosphate is bound by residues 56–58 (DIG), 132–135 (TTNE), and arginine 142.

It belongs to the IspF family. Homotrimer. A divalent metal cation serves as cofactor.

The enzyme catalyses 4-CDP-2-C-methyl-D-erythritol 2-phosphate = 2-C-methyl-D-erythritol 2,4-cyclic diphosphate + CMP. Its pathway is isoprenoid biosynthesis; isopentenyl diphosphate biosynthesis via DXP pathway; isopentenyl diphosphate from 1-deoxy-D-xylulose 5-phosphate: step 4/6. In terms of biological role, involved in the biosynthesis of isopentenyl diphosphate (IPP) and dimethylallyl diphosphate (DMAPP), two major building blocks of isoprenoid compounds. Catalyzes the conversion of 4-diphosphocytidyl-2-C-methyl-D-erythritol 2-phosphate (CDP-ME2P) to 2-C-methyl-D-erythritol 2,4-cyclodiphosphate (ME-CPP) with a corresponding release of cytidine 5-monophosphate (CMP). This chain is 2-C-methyl-D-erythritol 2,4-cyclodiphosphate synthase, found in Chlorobium phaeovibrioides (strain DSM 265 / 1930) (Prosthecochloris vibrioformis (strain DSM 265)).